The sequence spans 209 residues: Octanoyltransferase (209 aa).

The 180-residue stretch at D30–K209 folds into the BPL/LPL catalytic domain. Substrate is bound by residues R69–H76, A143–G145, and G156–A158. C174 functions as the Acyl-thioester intermediate in the catalytic mechanism.

It belongs to the LipB family.

The protein resides in the cytoplasm. The catalysed reaction is octanoyl-[ACP] + L-lysyl-[protein] = N(6)-octanoyl-L-lysyl-[protein] + holo-[ACP] + H(+). It functions in the pathway protein modification; protein lipoylation via endogenous pathway; protein N(6)-(lipoyl)lysine from octanoyl-[acyl-carrier-protein]: step 1/2. In terms of biological role, catalyzes the transfer of endogenously produced octanoic acid from octanoyl-acyl-carrier-protein onto the lipoyl domains of lipoate-dependent enzymes. Lipoyl-ACP can also act as a substrate although octanoyl-ACP is likely to be the physiological substrate. The sequence is that of Octanoyltransferase from Rickettsia peacockii (strain Rustic).